The primary structure comprises 600 residues: Elongation factor 4 (600 aa).

The 183-residue stretch at 5–187 folds into the tr-type G domain; it reads KYIRNFSIIA…AIINKLPSPK (183 aa). Residues 17 to 22 and 134 to 137 contribute to the GTP site; these read DHGKST and NKID.

This sequence belongs to the TRAFAC class translation factor GTPase superfamily. Classic translation factor GTPase family. LepA subfamily.

The protein resides in the cell inner membrane. The enzyme catalyses GTP + H2O = GDP + phosphate + H(+). Functionally, required for accurate and efficient protein synthesis under certain stress conditions. May act as a fidelity factor of the translation reaction, by catalyzing a one-codon backward translocation of tRNAs on improperly translocated ribosomes. Back-translocation proceeds from a post-translocation (POST) complex to a pre-translocation (PRE) complex, thus giving elongation factor G a second chance to translocate the tRNAs correctly. Binds to ribosomes in a GTP-dependent manner. This chain is Elongation factor 4, found in Rickettsia typhi (strain ATCC VR-144 / Wilmington).